A 274-amino-acid polypeptide reads, in one-letter code: Rhamnulose-1-phosphate aldolase (274 aa).

The active site involves Glu-117. Zn(2+) contacts are provided by His-141, His-143, and His-212.

It belongs to the aldolase class II family. RhaD subfamily. Homotetramer. The cofactor is Zn(2+).

It localises to the cytoplasm. It carries out the reaction L-rhamnulose 1-phosphate = (S)-lactaldehyde + dihydroxyacetone phosphate. Its pathway is carbohydrate degradation; L-rhamnose degradation; glycerone phosphate from L-rhamnose: step 3/3. In terms of biological role, catalyzes the reversible cleavage of L-rhamnulose-1-phosphate to dihydroxyacetone phosphate (DHAP) and L-lactaldehyde. In Yersinia pestis, this protein is Rhamnulose-1-phosphate aldolase.